Here is a 233-residue protein sequence, read N- to C-terminus: Orotidine 5'-phosphate decarboxylase (233 aa).

Substrate is bound by residues aspartate 13, lysine 35, 62 to 71 (DLKFHDIPNT), threonine 122, arginine 182, glutamine 191, glycine 211, and arginine 212. Residue lysine 64 is the Proton donor of the active site.

Belongs to the OMP decarboxylase family. Type 1 subfamily. In terms of assembly, homodimer.

The catalysed reaction is orotidine 5'-phosphate + H(+) = UMP + CO2. It participates in pyrimidine metabolism; UMP biosynthesis via de novo pathway; UMP from orotate: step 2/2. Catalyzes the decarboxylation of orotidine 5'-monophosphate (OMP) to uridine 5'-monophosphate (UMP). In Pseudomonas putida (strain GB-1), this protein is Orotidine 5'-phosphate decarboxylase.